The sequence spans 495 residues: Aspartyl/glutamyl-tRNA(Asn/Gln) amidotransferase subunit B (495 aa).

The protein belongs to the GatB/GatE family. GatB subfamily. Heterotrimer of A, B and C subunits.

It carries out the reaction L-glutamyl-tRNA(Gln) + L-glutamine + ATP + H2O = L-glutaminyl-tRNA(Gln) + L-glutamate + ADP + phosphate + H(+). The enzyme catalyses L-aspartyl-tRNA(Asn) + L-glutamine + ATP + H2O = L-asparaginyl-tRNA(Asn) + L-glutamate + ADP + phosphate + 2 H(+). Functionally, allows the formation of correctly charged Asn-tRNA(Asn) or Gln-tRNA(Gln) through the transamidation of misacylated Asp-tRNA(Asn) or Glu-tRNA(Gln) in organisms which lack either or both of asparaginyl-tRNA or glutaminyl-tRNA synthetases. The reaction takes place in the presence of glutamine and ATP through an activated phospho-Asp-tRNA(Asn) or phospho-Glu-tRNA(Gln). This chain is Aspartyl/glutamyl-tRNA(Asn/Gln) amidotransferase subunit B, found in Methanosarcina mazei (strain ATCC BAA-159 / DSM 3647 / Goe1 / Go1 / JCM 11833 / OCM 88) (Methanosarcina frisia).